The primary structure comprises 375 residues: WAT1-related protein At1g70260 (375 aa).

Transmembrane regions (helical) follow at residues 10 to 30 (LVPF…TIMA), 41 to 61 (FVFV…FSFL), 72 to 92 (IFSW…IFMF), 106 to 126 (IVVC…SIIL), 143 to 163 (MGTI…GPFI), 191 to 211 (WFLG…FNVV), 225 to 245 (VASF…LFME), 259 to 278 (LYLI…SVHV), 289 to 309 (VPLF…SFFV), and 312 to 332 (LHYG…TVSW). Positions 25 to 134 (ALTIMAKTAL…ILGRSKLDWR (110 aa)) constitute an EamA domain. The tract at residues 337–356 (ESEEKQSSNEERKSIKTIHH) is disordered.

This sequence belongs to the drug/metabolite transporter (DMT) superfamily. Plant drug/metabolite exporter (P-DME) (TC 2.A.7.4) family.

It is found in the membrane. The protein is WAT1-related protein At1g70260 of Arabidopsis thaliana (Mouse-ear cress).